The chain runs to 312 residues: Putative mitochondrial transporter UCP3 (312 aa).

Residues 1–10 (MVGLKPSDVP) lie on the Mitochondrial intermembrane side of the membrane. A helical membrane pass occupies residues 11 to 32 (PTMAVKFLGAGTAACFADLVTF). 3 Solcar repeats span residues 11-105 (PTMA…VKQV), 114-206 (SSLT…LKEK), and 215-300 (DNFP…LKRA). Residues 33 to 76 (PLDTAKVRLQIQGENQAVQTARLVQYRGVLGTILTMVRTEGPCS) lie on the Mitochondrial matrix side of the membrane. A helical membrane pass occupies residues 77–99 (PYNGLVAGLQRQMSFASIRIGLY). Over 100–119 (DSVKQVYTPKGADNSSLTTR) the chain is Mitochondrial intermembrane. A helical membrane pass occupies residues 120–136 (ILAGCTTGAMAVTCAQP). Residues 137 to 183 (TDVVKVRFQASIHLGPSRSDRKYSGTMDAYRTIAREEGVRGLWKGTL) lie on the Mitochondrial matrix side of the membrane. A helical transmembrane segment spans residues 184-200 (PNIMRNAIVNCAEVVTY). Topologically, residues 201 to 217 (DILKEKLLDYHLLTDNF) are mitochondrial intermembrane. The chain crosses the membrane as a helical span at residues 218–237 (PCHFVSAFGAGFCATVVASP). Residues 238 to 271 (VDVVKTRYMNSPPGQYFSPLDCMIKMVAQEGPTA) lie on the Mitochondrial matrix side of the membrane. Residues 272 to 294 (FYKGFTPSFLRLGSWNVVMFVTY) form a helical membrane-spanning segment. Positions 279 to 301 (SFLRLGSWNVVMFVTYEQLKRAL) are purine nucleotide binding. The Mitochondrial intermembrane segment spans residues 295–312 (EQLKRALMKVQMLRESPF).

It belongs to the mitochondrial carrier (TC 2.A.29) family. As to quaternary structure, interacts with HAX1; the interaction is direct and calcium-dependent. As to expression, only in skeletal muscle and heart. Also expressed in white and brown adipose tissues. Is more expressed in glycolytic than in oxidative skeletal muscles.

The protein resides in the mitochondrion inner membrane. The proton transporter activity is activated by fatty acids (in vitro). The proton transporter activity is inhibited by ATP and ADP (in vitro). The effect of Ubiquinone/coenzyme Q10 on the proton transporter activity in reconstituted membranes is unclear (in vitro). Functionally, putative transmembrane transporter that plays a role in mitochondrial metabolism via an as yet unclear mechanism. Originally, this mitochondrial protein was thought to act as a proton transmembrane transporter from the mitochondrial intermembrane space into the matrix, causing proton leaks through the inner mitochondrial membrane, thereby uncoupling mitochondrial membrane potential generation from ATP synthesis. However, this function is controversial and uncoupling may not be the function, or at least not the main function, but rather a consequence of more conventional metabolite transporter activity. The chain is Putative mitochondrial transporter UCP3 from Homo sapiens (Human).